The following is a 360-amino-acid chain: Peptide chain release factor 1 (360 aa).

The residue at position 235 (Gln-235) is an N5-methylglutamine.

Belongs to the prokaryotic/mitochondrial release factor family. In terms of processing, methylated by PrmC. Methylation increases the termination efficiency of RF1.

The protein localises to the cytoplasm. In terms of biological role, peptide chain release factor 1 directs the termination of translation in response to the peptide chain termination codons UAG and UAA. This Leptothrix cholodnii (strain ATCC 51168 / LMG 8142 / SP-6) (Leptothrix discophora (strain SP-6)) protein is Peptide chain release factor 1.